Reading from the N-terminus, the 101-residue chain is Large ribosomal subunit protein uL23 (101 aa).

Belongs to the universal ribosomal protein uL23 family. Part of the 50S ribosomal subunit. Contacts protein L29, and trigger factor when it is bound to the ribosome.

Functionally, one of the early assembly proteins it binds 23S rRNA. One of the proteins that surrounds the polypeptide exit tunnel on the outside of the ribosome. Forms the main docking site for trigger factor binding to the ribosome. This chain is Large ribosomal subunit protein uL23, found in Trichodesmium erythraeum (strain IMS101).